A 538-amino-acid chain; its full sequence is Atos homolog protein B (538 aa).

The span at 1 to 18 (MRHVQAEPSPSSEPEAGP) shows a compositional bias: low complexity. Disordered regions lie at residues 1–103 (MRHV…GLLG), 156–185 (HTRD…QLHT), and 197–308 (GGKS…PMGR). The segment covering 227-238 (HTPPGPGPPGPC) has biased composition (pro residues). Residues S254 and S255 each carry the phosphoserine modification. Polar residues predominate over residues 274–286 (AANSSDAKATSFW). The interval 348-430 (LLGNFEESLL…VPKVGTVQVT (83 aa)) is required for macropage invasion. The interval 436–444 (QTVVKMFLV) is transactivation domain 1 (TAD1).

This sequence belongs to the ATOS family.

The protein resides in the nucleus. Its function is as follows. Transcription regulator that may syncronize transcriptional and translational programs. This chain is Atos homolog protein B, found in Macaca fascicularis (Crab-eating macaque).